Consider the following 136-residue polypeptide: Early E3 15.3 kDa protein (136 aa).

This sequence belongs to the adenoviridae E3_15 family.

Its function is as follows. Protects virus-infected cells from TNF-induced cytolysis. The protein is Early E3 15.3 kDa protein of Human adenovirus B serotype 3 (HAdV-3).